Here is a 448-residue protein sequence, read N- to C-terminus: Tubulin beta-1 chain (448 aa).

Positions 11, 72, 141, 145, 146, 147, 207, and 229 each coordinate GTP. Glutamate 72 serves as a coordination point for Mg(2+). The segment at 424-448 (QQYQDAGMDDDEAEEAYEEEEPVEE) is disordered. Residues 430-448 (GMDDDEAEEAYEEEEPVEE) are compositionally biased toward acidic residues.

This sequence belongs to the tubulin family. In terms of assembly, dimer of alpha and beta chains. A typical microtubule is a hollow water-filled tube with an outer diameter of 25 nm and an inner diameter of 15 nM. Alpha-beta heterodimers associate head-to-tail to form protofilaments running lengthwise along the microtubule wall with the beta-tubulin subunit facing the microtubule plus end conferring a structural polarity. Microtubules usually have 13 protofilaments but different protofilament numbers can be found in some organisms and specialized cells. Requires Mg(2+) as cofactor.

Its subcellular location is the cytoplasm. It localises to the cytoskeleton. Functionally, tubulin is the major constituent of microtubules, a cylinder consisting of laterally associated linear protofilaments composed of alpha- and beta-tubulin heterodimers. Microtubules grow by the addition of GTP-tubulin dimers to the microtubule end, where a stabilizing cap forms. Below the cap, tubulin dimers are in GDP-bound state, owing to GTPase activity of alpha-tubulin. The chain is Tubulin beta-1 chain (TUB1) from Colletotrichum gloeosporioides (Anthracnose fungus).